The sequence spans 188 residues: MNLGITEVKKGMILKIDNELYSVVKTEFVNPGKGSAFIRTKLKNIVRDSSIERTFKAAEKLESVDLERRKMQYCYADGDQIIFMDVNDYEQIPVSKDYVEDILPFMKEETPVEVAFYNDKPIGVTPPNFAILEVTYAEDGLKGDTTGLALKRVTVETGGEVQVPIFIKQGDTVKIDLRDLSYVERVNK.

The protein belongs to the elongation factor P family.

It localises to the cytoplasm. It functions in the pathway protein biosynthesis; polypeptide chain elongation. Involved in peptide bond synthesis. Stimulates efficient translation and peptide-bond synthesis on native or reconstituted 70S ribosomes in vitro. Probably functions indirectly by altering the affinity of the ribosome for aminoacyl-tRNA, thus increasing their reactivity as acceptors for peptidyl transferase. The sequence is that of Elongation factor P from Leptospira biflexa serovar Patoc (strain Patoc 1 / Ames).